Consider the following 122-residue polypeptide: Phospholipase A2 homolog ECS_00014 (122 aa).

7 disulfides stabilise this stretch: C26-C115, C28-C44, C43-C95, C49-C122, C50-C88, C57-C81, and C75-C86. The interval K105 to G117 is important for membrane-damaging activities in eukaryotes and bacteria; heparin-binding.

Belongs to the phospholipase A2 family. Group II subfamily. S49 sub-subfamily. Monomer. Expressed by the venom gland.

It localises to the secreted. Functionally, snake venom phospholipase A2 homolog that lacks enzymatic activity. Shows high myotoxin activities and displays edema-inducing activities. Has cytotoxic activities against HUVEC cells (LC(50)=12.2 uL) and human lung adenocarcinoma A549 cells (LC(50)=8.5 uL). The polypeptide is Phospholipase A2 homolog ECS_00014 (Echis carinatus sochureki (Saw-scaled viper)).